The chain runs to 5061 residues: E3 ubiquitin-protein ligase rnf213-beta (5061 aa).

Basic residues predominate over residues 1 to 12 (MTRKRKSGKKGK). The segment at 1–334 (MTRKRKSGKK…QRKPSPVRAP (334 aa)) is disordered. 2 stretches are compositionally biased toward polar residues: residues 24-52 (GGST…TQKD) and 75-87 (SDGS…TNKE). Over residues 100-110 (LQKKGPQKRKG) the composition is skewed to basic residues. 2 stretches are compositionally biased toward polar residues: residues 127–163 (QTSY…TSAS) and 172–200 (TETV…QPPQ). Basic and acidic residues-rich tracts occupy residues 217 to 229 (KGSE…EESV) and 236 to 289 (LSEI…EEPK). Positions 292-301 (AAAAATGKTG) are enriched in low complexity. Residues 306–322 (EQTNQIEANQDSTMESK) show a composition bias toward polar residues. Residues 1923 to 1928 (AVGKSL), glutamate 2023, aspartate 2074, lysine 2417, and serine 2492 contribute to the ATP site. Positions 3957, 3960, 3972, 3974, 3977, 3980, 3993, 3996, 4451, and 4455 each coordinate Zn(2+). The RING-type zinc finger occupies 3957–3997 (CRVCLMELSEPFALPCEHVFCRSCLRRSMEREEAQHCPVCR). The RZ-type zinc finger occupies 4429 to 4501 (MPDDHTSEAK…AYGDYDRTRP (73 aa)). Catalysis depends on cysteine 4462, which acts as the Nucleophile; for E3 ubiquitin-lipopolysaccharide ligase activity. Positions 4471 and 4474 each coordinate Zn(2+).

Belongs to the AAA ATPase family.

The protein localises to the cytoplasm. Its subcellular location is the cytosol. It is found in the lipid droplet. The enzyme catalyses S-ubiquitinyl-[E2 ubiquitin-conjugating enzyme]-L-cysteine + [acceptor protein]-L-lysine = [E2 ubiquitin-conjugating enzyme]-L-cysteine + N(6)-ubiquitinyl-[acceptor protein]-L-lysine.. It carries out the reaction ATP + H2O = ADP + phosphate + H(+). Its pathway is protein modification; protein ubiquitination. Functionally, atypical E3 ubiquitin ligase that can catalyze ubiquitination of both proteins and lipids, and which is involved in various processes, such as lipid metabolism, angiogenesis and cell-autonomous immunity. Acts as a key immune sensor by catalyzing ubiquitination of the lipid A moiety of bacterial lipopolysaccharide (LPS) via its RZ-type zinc-finger: restricts the proliferation of cytosolic bacteria, such as Salmonella, by generating the bacterial ubiquitin coat through the ubiquitination of LPS. Ubiquitination of LPS triggers cell-autonomous immunity, such as antibacterial autophagy, leading to degradation of the microbial invader. Involved in lipid metabolism by regulating fat storage and lipid droplet formation; act by inhibiting the lipolytic process. Also regulates lipotoxicity by inhibiting desaturation of fatty acids. Also acts as an E3 ubiquitin-protein ligase via its RING-type zinc finger. Involved in the non-canonical Wnt signaling pathway in vascular development: acts by mediating ubiquitination and degradation of proteins downstream of rspo3, leading to inhibit the non-canonical Wnt signaling pathway and promoting vessel regression. Also has ATPase activity; ATPase activity is required for ubiquitination of LPS. The chain is E3 ubiquitin-protein ligase rnf213-beta (rnf213b) from Danio rerio (Zebrafish).